The primary structure comprises 92 residues: C-C motif chemokine 4 (92 aa).

Residues 1-23 (MKLCVTVLSLLMLVAAFCSPALS) form the signal peptide. Cystine bridges form between Cys-34/Cys-58 and Cys-35/Cys-74.

Belongs to the intercrine beta (chemokine CC) family. As to quaternary structure, homodimer and heterodimer of MIP-1-alpha(4-69) and MIP-1-beta(3-69). Post-translationally, N-terminal processed form MIP-1-beta(3-69) is produced by proteolytic cleavage after secretion from peripheral blood lymphocytes.

The protein resides in the secreted. Monokine with inflammatory and chemokinetic properties. Binds to CCR5. One of the major HIV-suppressive factors produced by CD8+ T-cells. Recombinant MIP-1-beta induces a dose-dependent inhibition of different strains of HIV-1, HIV-2, and simian immunodeficiency virus (SIV). The processed form MIP-1-beta(3-69) retains the abilities to induce down-modulation of surface expression of the chemokine receptor CCR5 and to inhibit the CCR5-mediated entry of HIV-1 in T-cells. MIP-1-beta(3-69) is also a ligand for CCR1 and CCR2 isoform B. The protein is C-C motif chemokine 4 (CCL4) of Homo sapiens (Human).